Here is a 298-residue protein sequence, read N- to C-terminus: uncharacterized protein (298 aa).

8 consecutive transmembrane segments (helical) span residues 5-25 (SLATLFALLILATLINRFLLW), 52-72 (VISGPRWMTLTFFALISFLAL), 105-125 (LFLLFIPLAGFLILATGQVLV), 138-158 (IFWGWIMTVFALSHAAWLLML), 163-183 (IQGGALLVLFLLALTESNDIA), 208-228 (GLMGGVITIMIASLIIGPLLT), 236-256 (LLAGLLIGISGFCGDVVMSAI), and 273-293 (GGLLDRIDSLIFTAPVFFYFI).

Belongs to the CDS family.

Its subcellular location is the cell membrane. This is an uncharacterized protein from Escherichia coli (strain K12).